A 168-amino-acid polypeptide reads, in one-letter code: Ubiquitin-fold modifier-conjugating enzyme 1 (168 aa).

The active-site Glycyl thioester intermediate is the C116.

It belongs to the ubiquitin-conjugating enzyme family. UFC1 subfamily.

In terms of biological role, E2-like enzyme which forms an intermediate with UFM1 via a thioester linkage. In Trichoplax adhaerens (Trichoplax reptans), this protein is Ubiquitin-fold modifier-conjugating enzyme 1.